The primary structure comprises 100 residues: Large ribosomal subunit protein mL53 (100 aa).

It belongs to the mitochondrion-specific ribosomal protein mL53 family. In terms of assembly, component of the mitochondrial large ribosomal subunit (mt-LSU). Mature yeast 74S mitochondrial ribosomes consist of a small (37S) and a large (54S) subunit. The 37S small subunit contains a 15S ribosomal RNA (15S mt-rRNA) and at least 32 different proteins. The 54S large subunit contains a 21S rRNA (21S mt-rRNA) and at least 45 different proteins.

The protein localises to the mitochondrion. In terms of biological role, component of the mitochondrial ribosome (mitoribosome), a dedicated translation machinery responsible for the synthesis of mitochondrial genome-encoded proteins, including at least some of the essential transmembrane subunits of the mitochondrial respiratory chain. The mitoribosomes are attached to the mitochondrial inner membrane and translation products are cotranslationally integrated into the membrane. In Schizosaccharomyces pombe (strain 972 / ATCC 24843) (Fission yeast), this protein is Large ribosomal subunit protein mL53 (mrpl44).